The primary structure comprises 148 residues: Deoxyuridine 5'-triphosphate nucleotidohydrolase (148 aa).

Residues 68-70, Asn81, 85-87, and Lys95 contribute to the substrate site; these read RSG and TID.

Belongs to the dUTPase family. The cofactor is Mg(2+).

It carries out the reaction dUTP + H2O = dUMP + diphosphate + H(+). It participates in pyrimidine metabolism; dUMP biosynthesis; dUMP from dCTP (dUTP route): step 2/2. In terms of biological role, this enzyme is involved in nucleotide metabolism: it produces dUMP, the immediate precursor of thymidine nucleotides and it decreases the intracellular concentration of dUTP so that uracil cannot be incorporated into DNA. This chain is Deoxyuridine 5'-triphosphate nucleotidohydrolase, found in Rickettsia akari (strain Hartford).